Reading from the N-terminus, the 230-residue chain is CDP-diacylglycerol--inositol 3-phosphatidyltransferase (230 aa).

Topologically, residues 1–28 (MPSAKSSDLSPTKTNLESTTKQKVSVQD) are cytoplasmic. Residues 29-51 (IFLYIPNLIGYLRIITAIISFLC) traverse the membrane as a helical segment. Residues 52 to 57 (MANHPV) lie on the Lumenal side of the membrane. Residues 58–77 (ATLIFYGISGFLDAFDGYAA) traverse the membrane as a helical segment. Mg(2+)-binding residues include aspartate 70 and aspartate 73. Positions 74, 78, and 84 each coordinate a CDP-1,2-diacyl-sn-glycerol. Topologically, residues 78 to 89 (RKFNQGTRFGAV) are cytoplasmic. Residues 90-110 (LDMVTDRCATSSLIVYLGVLY) traverse the membrane as a helical segment. Mg(2+) is bound by residues aspartate 91 and aspartate 95. Aspartate 95 (proton acceptor) is an active-site residue. Topologically, residues 111-112 (PQ) are lumenal. The helical transmembrane segment at 113 to 133 (YTVFWQILVSLDLSSHYMHMY) threads the bilayer. The Cytoplasmic segment spans residues 134–161 (AMLSAGSTSHKNVDETQSKLLSLYYNNR). The chain crosses the membrane as a helical span at residues 162–182 (LVLFFVCLINELFYMAVYLHY). Over 183-184 (YK) the chain is Lumenal. The chain crosses the membrane as a helical span at residues 185 to 205 (FFWLGTVMLVASTPIWLFKQI). Topologically, residues 206 to 230 (ANIIQLKNASLILARMDAHDHSKRD) are cytoplasmic.

It belongs to the CDP-alcohol phosphatidyltransferase class-I family. The cofactor is Mn(2+). Requires Mg(2+) as cofactor.

The protein resides in the endoplasmic reticulum membrane. It carries out the reaction a CDP-1,2-diacyl-sn-glycerol + myo-inositol = a 1,2-diacyl-sn-glycero-3-phospho-(1D-myo-inositol) + CMP + H(+). With respect to regulation, inhibited by calcium and zinc ions. Inhibited by nucleoside triphosphates and diphosphates. Functionally, catalyzes the synthesis of phosphatidylinositol (PtdIns). Required for proper membrane dynamics and cell wall integrity. This is CDP-diacylglycerol--inositol 3-phosphatidyltransferase from Candida albicans (strain SC5314 / ATCC MYA-2876) (Yeast).